Consider the following 912-residue polypeptide: Nitrate reductase [NADH] (912 aa).

The disordered stretch occupies residues 1 to 99 (SVEPRQPFGR…PRDEGTADAW (99 aa)). The span at 13 to 23 (APATAPTARAP) shows a compositional bias: low complexity. Acidic residues predominate over residues 54 to 68 (AEEDEEDDDEDDEGH). A compositionally biased stretch (basic and acidic residues) spans 85 to 94 (PSTRDPRDEG). Cys186 lines the Mo-molybdopterin pocket. One can recognise a Cytochrome b5 heme-binding domain in the interval 535-610 (DKQFTMSEVR…LDTYRIGELI (76 aa)). Heme contacts are provided by His570 and His593. The FAD-binding FR-type domain maps to 651-764 (REKVPCRLVD…KGPLGHVEYT (114 aa)). FAD-binding positions include 703–706 (RAYT), 720–724 (LVKVY), Phe725, Phe732, 737–739 (LMT), Ser788, and Thr791.

Belongs to the nitrate reductase family. As to quaternary structure, homodimer. It depends on FAD as a cofactor. Requires heme as cofactor. The cofactor is Mo-molybdopterin.

It catalyses the reaction nitrite + NAD(+) + H2O = nitrate + NADH + H(+). Its function is as follows. Nitrate reductase is a key enzyme involved in the first step of nitrate assimilation in plants, fungi and bacteria. The polypeptide is Nitrate reductase [NADH] (Hordeum vulgare (Barley)).